The chain runs to 570 residues: Frizzled-2 (570 aa).

The first 28 residues, 1 to 28, serve as a signal peptide directing secretion; sequence MRARSALPRSALPRLLLPLLLLPAAGPA. Topologically, residues 29–252 are extracellular; the sequence is QFHGEKGISI…HHHTRFARLW (224 aa). An FZ domain is found at 39-158; sequence PDHGFCQPIS…HGAEQICVGQ (120 aa). 5 disulfides stabilise this stretch: Cys44–Cys105, Cys52–Cys98, Cys89–Cys126, Cys115–Cys155, and Cys119–Cys143. Asn58 carries an N-linked (GlcNAc...) asparagine glycan. The N-linked (GlcNAc...) asparagine glycan is linked to Asn159. Residues 166–194 are disordered; the sequence is PALLTTAPPSGLQPGAGGTPGGPGGGGAP. The span at 179 to 193 shows a compositional bias: gly residues; that stretch reads PGAGGTPGGPGGGGA. Residues 253 to 273 traverse the membrane as a helical segment; it reads ILTWSVLCCASTFFTVTTSLV. Residues 274-284 lie on the Cytoplasmic side of the membrane; that stretch reads AMQRFRYPERP. Residues 285–305 form a helical membrane-spanning segment; the sequence is IIFLSGCYTMVSVAYIAGFVL. Over 306-332 the chain is Extracellular; sequence QERVVCNERFSEDGYRTVGQGTKKEGC. The helical transmembrane segment at 333–353 threads the bilayer; the sequence is TILFMMLYFFSMASSIWWVIL. The Cytoplasmic segment spans residues 354-375; sequence SLTWFLAAGMKWGHAAIEANSQ. Residues 376-396 form a helical membrane-spanning segment; the sequence is YFHLAAWAVPAVKTITILAMG. The Extracellular segment spans residues 397-419; the sequence is QIDGDLLSGVCFVGLNRLDPLRG. Residues 420–440 form a helical membrane-spanning segment; sequence FVLAPLFVYLFIGTSFLLAGF. Over 441–466 the chain is Cytoplasmic; it reads VSLFRIRTIMKHDGTKTEPLERLMVR. The helical transmembrane segment at 467 to 487 threads the bilayer; it reads IGVFSVLYTVPATIVIACYFY. Topologically, residues 488–524 are extracellular; the sequence is EQAFREHWERSWVSQHCKSLAIPCPAHYTPRTSPDFT. A helical transmembrane segment spans residues 525 to 545; the sequence is VYMIKYLMTLIVGITSGFWIW. The Cytoplasmic segment spans residues 546-570; sequence SGKTLHSWRKFYTRLTNSRHGETTV. The short motif at 548–553 is the Lys-Thr-X-X-X-Trp motif, mediates interaction with the PDZ domain of Dvl family members element; that stretch reads KTLHSW. The PDZ-binding motif lies at 568 to 570; the sequence is TTV.

This sequence belongs to the G-protein coupled receptor Fz/Smo family. Post-translationally, ubiquitinated by ZNRF3, leading to its degradation by the proteasome. In terms of tissue distribution, widely expressed. Most abundant in kidney, liver, uterus, ovary and heart. Lower levels seen in brain and intestine. Extremely low in calvaria, mammary glands and testis.

It is found in the membrane. It localises to the cell membrane. Its function is as follows. Receptor for Wnt proteins. Most of frizzled receptors are coupled to the beta-catenin canonical signaling pathway, which leads to the activation of disheveled proteins, inhibition of GSK-3 kinase, nuclear accumulation of beta-catenin and activation of Wnt target genes. A second signaling pathway involving PKC and calcium fluxes has been seen for some family members, but it is not yet clear if it represents a distinct pathway or if it can be integrated in the canonical pathway, as PKC seems to be required for Wnt-mediated inactivation of GSK-3 kinase. Both pathways seem to involve interactions with G-proteins. May be involved in transduction and intercellular transmission of polarity information during tissue morphogenesis and/or in differentiated tissues. Activation by Wnt5A stimulates PKC activity via a G-protein-dependent mechanism. The sequence is that of Frizzled-2 (Fzd2) from Rattus norvegicus (Rat).